The sequence spans 258 residues: Sugar fermentation stimulation protein homolog (258 aa).

It belongs to the SfsA family.

The sequence is that of Sugar fermentation stimulation protein homolog from Prochlorococcus marinus (strain NATL2A).